A 279-amino-acid chain; its full sequence is Non-structural maintenance of chromosomes element 3 homolog (279 aa).

The disordered stretch occupies residues 1-52 (MLQKPRGRGRPSTQADPERDWGGAGEEGPSTSRAAGGSSQGSRASLSAPTVG). Low complexity predominate over residues 30-48 (STSRAAGGSSQGSRASLSA). S38 is modified (phosphoserine). Residues 52–279 (GPRTQKQLEL…ATASAPATSS (228 aa)) form an interaction with NSMCE1 region. In terms of domain architecture, MAGE spans 59 to 259 (LELKVAELVQ…KDWPTQYCEA (201 aa)).

In terms of assembly, component of the SMC5-SMC6 complex which consists at least of SMC5, SMC6, NSMCE2, NSMCE1, NSMCE4A or EID3 and NSMCE3. NSMCE1, NSMCE4A or EID3 and NSMCE3 probably form a subcomplex that bridges the head domains of the SMC5:SMC6 heterodimer. Interacts with PJA1. Interacts with E2F1 (via C-terminus). Interacts with NGFR (via C-terminus). Interacts with NSMCE1. Interacts with NSMCE4. Interacts with SMC6. Interacts with EID3. In terms of tissue distribution, ubiquitous.

Its subcellular location is the cytoplasm. The protein resides in the nucleus. The protein localises to the chromosome. It is found in the telomere. In terms of biological role, component of the SMC5-SMC6 complex, a complex involved in repair of DNA double-strand breaks by homologous recombination. The complex may promote sister chromatid homologous recombination by recruiting the SMC1-SMC3 cohesin complex to double-strand breaks. The complex is required for telomere maintenance via recombination in ALT (alternative lengthening of telomeres) cell lines and mediates sumoylation of shelterin complex (telosome) components which is proposed to lead to shelterin complex disassembly in ALT-associated PML bodies (APBs). In vitro enhances ubiquitin ligase activity of NSMCE1. Proposed to act through recruitment and/or stabilization of the Ubl-conjugating enzyme (E2) at the E3:substrate complex. May be a growth suppressor that facilitates the entry of the cell into cell cycle arrest. The polypeptide is Non-structural maintenance of chromosomes element 3 homolog (Nsmce3) (Mus musculus (Mouse)).